Reading from the N-terminus, the 316-residue chain is Putative ring-cleaving dioxygenase MhqA (316 aa).

VOC domains follow at residues 5 to 131 (GIHH…LTAD) and 154 to 278 (GLGP…LSTD). The Fe cation site is built by His-8, His-226, and Glu-274.

The protein belongs to the extradiol ring-cleavage dioxygenase family. It depends on Fe(2+) as a cofactor.

The protein resides in the cytoplasm. Putative ring-cleavage dioxygenase that may contribute to the degradation of aromatic compounds. The protein is Putative ring-cleaving dioxygenase MhqA (mhqA) of Bacillus subtilis (strain 168).